Consider the following 541-residue polypeptide: Berberine bridge enzyme-like 24 (541 aa).

The signal sequence occupies residues 1–32 (MGNSKPLPTISCIIVSVLYFSFYCITPTSSSA). The cysteines at positions 41 and 105 are disulfide-linked. Asn-62 is a glycosylation site (N-linked (GlcNAc...) asparagine). Residues 83–259 (SMPKPGFIFR…LAWKIKLVPV (177 aa)) enclose the FAD-binding PCMH-type domain. The segment at residues 120–184 (HDFEALSYVS…KIHGFPAGLC (65 aa)) is a cross-link (6-(S-cysteinyl)-8alpha-(pros-histidyl)-FAD (His-Cys)). 3 N-linked (GlcNAc...) asparagine glycosylation sites follow: Asn-309, Asn-408, and Asn-435.

Belongs to the oxygen-dependent FAD-linked oxidoreductase family. FAD serves as cofactor. In terms of processing, the FAD cofactor is bound via a bicovalent 6-S-cysteinyl, 8alpha-N1-histidyl FAD linkage.

It localises to the secreted. The protein localises to the cell wall. The polypeptide is Berberine bridge enzyme-like 24 (Arabidopsis thaliana (Mouse-ear cress)).